The primary structure comprises 129 residues: Large-conductance mechanosensitive channel (129 aa).

3 helical membrane-spanning segments follow: residues 8–28 (FAFR…AAFS), 30–50 (IIKS…IGGI), and 67–87 (GQFL…FLFV).

This sequence belongs to the MscL family. Homopentamer.

The protein localises to the cell membrane. Channel that opens in response to stretch forces in the membrane lipid bilayer. May participate in the regulation of osmotic pressure changes within the cell. The chain is Large-conductance mechanosensitive channel from Exiguobacterium sibiricum (strain DSM 17290 / CCUG 55495 / CIP 109462 / JCM 13490 / 255-15).